The following is a 262-amino-acid chain: Phosphoribosyl 1,2-cyclic phosphate 1,2-diphosphodiesterase (262 aa).

The Mn(2+) site is built by H6, H8, D13, H38, E63, H76, H193, D245, and H247.

Belongs to the PHP family. Mn(2+) serves as cofactor.

The catalysed reaction is alpha-D-ribose 1,2-cyclic phosphate 5-phosphate + H2O = D-ribose 2,5-bisphosphate + H(+). It carries out the reaction D-ribose 2,5-bisphosphate + H2O = D-ribose 5-phosphate + phosphate. Involved in degradation of methylphosphonate. Catalyzes the hydrolysis of the phosphate ester at carbon-1 of 5-phospho-D-ribose 1,2-cyclic phosphate to form ribose 2,5-bisphosphate. This intermediate is then hydrolyzed to ribose-5-phosphate and inorganic phosphate. The chain is Phosphoribosyl 1,2-cyclic phosphate 1,2-diphosphodiesterase from Eggerthella lenta (strain ATCC 25559 / DSM 2243 / CCUG 17323 / JCM 9979 / KCTC 3265 / NCTC 11813 / VPI 0255 / 1899 B) (Eubacterium lentum).